Consider the following 430-residue polypeptide: GTPase Obg (430 aa).

Residues 1-158 form the Obg domain; that stretch reads MFIDTAKVFV…LNIVLELKLL (158 aa). Residues 159–331 form the OBG-type G domain; it reads ADVGLLGFPN…VMKEAARILK (173 aa). GTP is bound by residues 165 to 172, 190 to 194, 212 to 215, 282 to 285, and 312 to 314; these read GFPNVGKS, FTTLK, DIPG, NKSD, and SAA. Mg(2+) contacts are provided by serine 172 and threonine 192. The region spanning 345 to 430 is the OCT domain; sequence MYIPEEKRFT…LNDFEFEYIL (86 aa).

It belongs to the TRAFAC class OBG-HflX-like GTPase superfamily. OBG GTPase family. Monomer. Mg(2+) is required as a cofactor.

The protein resides in the cytoplasm. In terms of biological role, an essential GTPase which binds GTP, GDP and possibly (p)ppGpp with moderate affinity, with high nucleotide exchange rates and a fairly low GTP hydrolysis rate. Plays a role in control of the cell cycle, stress response, ribosome biogenesis and in those bacteria that undergo differentiation, in morphogenesis control. The polypeptide is GTPase Obg (Clostridium beijerinckii (strain ATCC 51743 / NCIMB 8052) (Clostridium acetobutylicum)).